The primary structure comprises 328 residues: GTPase Obg (328 aa).

Positions 2–160 (YNFKDSVNIT…LSVRLELFLV (159 aa)) constitute an Obg domain. One can recognise an OBG-type G domain in the interval 161-326 (ADIGLVGLPN…LIKEFFILAK (166 aa)). GTP contacts are provided by residues 167 to 174 (GLPNAGKS), 192 to 196 (FTTKI), 213 to 216 (DIPG), 280 to 283 (NKLD), and 307 to 309 (SIY). Residues Ser174 and Thr194 each coordinate Mg(2+).

The protein belongs to the TRAFAC class OBG-HflX-like GTPase superfamily. OBG GTPase family. Monomer. It depends on Mg(2+) as a cofactor.

The protein resides in the cytoplasm. Functionally, an essential GTPase which binds GTP, GDP and possibly (p)ppGpp with moderate affinity, with high nucleotide exchange rates and a fairly low GTP hydrolysis rate. Plays a role in control of the cell cycle, stress response, ribosome biogenesis and in those bacteria that undergo differentiation, in morphogenesis control. The sequence is that of GTPase Obg from Borreliella burgdorferi (strain ATCC 35210 / DSM 4680 / CIP 102532 / B31) (Borrelia burgdorferi).